A 130-amino-acid polypeptide reads, in one-letter code: MSKRTEQLGHEIQRILGEVIQYELKDPRVGFATVVGVEVTADLQIARVRISVMGTPDERRETMAALERARGFLRRRLAEELNYLRFVPELRLILDTSVDYSLHIDELLRRAAEERADSPPQQPEDDKPAE.

It belongs to the RbfA family. Monomer. Binds 30S ribosomal subunits, but not 50S ribosomal subunits or 70S ribosomes.

The protein localises to the cytoplasm. One of several proteins that assist in the late maturation steps of the functional core of the 30S ribosomal subunit. Associates with free 30S ribosomal subunits (but not with 30S subunits that are part of 70S ribosomes or polysomes). Required for efficient processing of 16S rRNA. May interact with the 5'-terminal helix region of 16S rRNA. The protein is Ribosome-binding factor A of Roseiflexus sp. (strain RS-1).